The chain runs to 447 residues: Na(+)-translocating NADH-quinone reductase subunit A (447 aa).

It belongs to the NqrA family. In terms of assembly, composed of six subunits; NqrA, NqrB, NqrC, NqrD, NqrE and NqrF.

The catalysed reaction is a ubiquinone + n Na(+)(in) + NADH + H(+) = a ubiquinol + n Na(+)(out) + NAD(+). NQR complex catalyzes the reduction of ubiquinone-1 to ubiquinol by two successive reactions, coupled with the transport of Na(+) ions from the cytoplasm to the periplasm. NqrA to NqrE are probably involved in the second step, the conversion of ubisemiquinone to ubiquinol. In Yersinia pestis bv. Antiqua (strain Angola), this protein is Na(+)-translocating NADH-quinone reductase subunit A.